A 23-amino-acid chain; its full sequence is Septenin 2c (23 aa).

As to expression, expressed in skin granular glands.

It is found in the secreted. May act as an antimicrobial peptide. This Osteopilus septentrionalis (Cuban treefrog) protein is Septenin 2c.